The sequence spans 300 residues: 33 kDa chaperonin (300 aa).

Disulfide bonds link Cys-235–Cys-237 and Cys-269–Cys-272.

Belongs to the HSP33 family. Under oxidizing conditions two disulfide bonds are formed involving the reactive cysteines. Under reducing conditions zinc is bound to the reactive cysteines and the protein is inactive.

It localises to the cytoplasm. In terms of biological role, redox regulated molecular chaperone. Protects both thermally unfolding and oxidatively damaged proteins from irreversible aggregation. Plays an important role in the bacterial defense system toward oxidative stress. In Pseudomonas fluorescens (strain Pf0-1), this protein is 33 kDa chaperonin.